The chain runs to 106 residues: ATP-dependent Clp protease adapter protein ClpS (106 aa).

This sequence belongs to the ClpS family. In terms of assembly, binds to the N-terminal domain of the chaperone ClpA.

In terms of biological role, involved in the modulation of the specificity of the ClpAP-mediated ATP-dependent protein degradation. This chain is ATP-dependent Clp protease adapter protein ClpS, found in Salmonella gallinarum (strain 287/91 / NCTC 13346).